The primary structure comprises 274 residues: Bis(5'-nucleosyl)-tetraphosphatase, symmetrical (274 aa).

The protein belongs to the Ap4A hydrolase family.

The catalysed reaction is P(1),P(4)-bis(5'-adenosyl) tetraphosphate + H2O = 2 ADP + 2 H(+). Functionally, hydrolyzes diadenosine 5',5'''-P1,P4-tetraphosphate to yield ADP. The sequence is that of Bis(5'-nucleosyl)-tetraphosphatase, symmetrical from Shewanella baltica (strain OS155 / ATCC BAA-1091).